Reading from the N-terminus, the 227-residue chain is Cytochrome c oxidase subunit 2 (227 aa).

The Mitochondrial intermembrane segment spans residues 1 to 14 (MAYPFQLGFQDATS). Residues 15–45 (PIMEELLHFHDHALMIVFLISSLVLYLISVM) form a helical membrane-spanning segment. The Mitochondrial matrix segment spans residues 46–59 (LTTSLTHTSTMDAQ). A helical transmembrane segment spans residues 60–87 (EVETIWTILPAMILIMIALPSLRILYMM). The Mitochondrial intermembrane portion of the chain corresponds to 88–227 (DEINNPYLTV…YFEKWSSSML (140 aa)). Cu cation-binding residues include His-161, Cys-196, Glu-198, Cys-200, His-204, and Met-207. Glu-198 serves as a coordination point for Mg(2+). Tyr-218 is subject to Phosphotyrosine.

It belongs to the cytochrome c oxidase subunit 2 family. In terms of assembly, component of the cytochrome c oxidase (complex IV, CIV), a multisubunit enzyme composed of 14 subunits. The complex is composed of a catalytic core of 3 subunits MT-CO1, MT-CO2 and MT-CO3, encoded in the mitochondrial DNA, and 11 supernumerary subunits COX4I, COX5A, COX5B, COX6A, COX6B, COX6C, COX7A, COX7B, COX7C, COX8 and NDUFA4, which are encoded in the nuclear genome. The complex exists as a monomer or a dimer and forms supercomplexes (SCs) in the inner mitochondrial membrane with NADH-ubiquinone oxidoreductase (complex I, CI) and ubiquinol-cytochrome c oxidoreductase (cytochrome b-c1 complex, complex III, CIII), resulting in different assemblies (supercomplex SCI(1)III(2)IV(1) and megacomplex MCI(2)III(2)IV(2)). Found in a complex with TMEM177, COA6, COX18, COX20, SCO1 and SCO2. Interacts with TMEM177 in a COX20-dependent manner. Interacts with COX20. Interacts with COX16. It depends on Cu cation as a cofactor.

The protein resides in the mitochondrion inner membrane. It catalyses the reaction 4 Fe(II)-[cytochrome c] + O2 + 8 H(+)(in) = 4 Fe(III)-[cytochrome c] + 2 H2O + 4 H(+)(out). Component of the cytochrome c oxidase, the last enzyme in the mitochondrial electron transport chain which drives oxidative phosphorylation. The respiratory chain contains 3 multisubunit complexes succinate dehydrogenase (complex II, CII), ubiquinol-cytochrome c oxidoreductase (cytochrome b-c1 complex, complex III, CIII) and cytochrome c oxidase (complex IV, CIV), that cooperate to transfer electrons derived from NADH and succinate to molecular oxygen, creating an electrochemical gradient over the inner membrane that drives transmembrane transport and the ATP synthase. Cytochrome c oxidase is the component of the respiratory chain that catalyzes the reduction of oxygen to water. Electrons originating from reduced cytochrome c in the intermembrane space (IMS) are transferred via the dinuclear copper A center (CU(A)) of subunit 2 and heme A of subunit 1 to the active site in subunit 1, a binuclear center (BNC) formed by heme A3 and copper B (CU(B)). The BNC reduces molecular oxygen to 2 water molecules using 4 electrons from cytochrome c in the IMS and 4 protons from the mitochondrial matrix. This is Cytochrome c oxidase subunit 2 (MT-CO2) from Rousettus leschenaultii (Leschenault's rousette).